Reading from the N-terminus, the 324-residue chain is uncharacterized protein (324 aa).

An HTH lysR-type domain is found at Leu6–Thr63. The segment at residues Ile23–Ala42 is a DNA-binding region (H-T-H motif).

Belongs to the LysR transcriptional regulatory family.

This is an uncharacterized protein from Escherichia coli (strain K12).